The following is a 204-amino-acid chain: MIPTSDITGLILAGGRGSRMGGVDKGLQTFRGAPMAMHTLMRLSPQVGHMLINANRNLAAYESFGVPVVADSVPDFAGPLAGILAGLEQCQTRYLLTAPCDSPFVPTDLAAKLSQAMEEANARIAMPVTMEPDAQGQPRRQVQPVFCLIDALLADDLIVYLQGGGRKIETWTARHATVDVLFDDSTAFANINTLEELHQLAERR.

Residues 12 to 14 (LAG), Lys-25, Asn-53, Asp-71, and Asp-101 contribute to the GTP site. Asp-101 is a binding site for Mg(2+).

This sequence belongs to the MobA family. In terms of assembly, monomer. Mg(2+) is required as a cofactor.

Its subcellular location is the cytoplasm. The enzyme catalyses Mo-molybdopterin + GTP + H(+) = Mo-molybdopterin guanine dinucleotide + diphosphate. Functionally, transfers a GMP moiety from GTP to Mo-molybdopterin (Mo-MPT) cofactor (Moco or molybdenum cofactor) to form Mo-molybdopterin guanine dinucleotide (Mo-MGD) cofactor. The sequence is that of Molybdenum cofactor guanylyltransferase from Ralstonia pickettii (strain 12J).